The primary structure comprises 98 residues: Large ribosomal subunit protein bL27 (98 aa).

The propeptide occupies 1–10 (MELKMNLQLF). The interval 11–30 (AQKKGTGSSKNGRDSISKRL) is disordered.

This sequence belongs to the bacterial ribosomal protein bL27 family. Post-translationally, the N-terminus is cleaved by ribosomal processing cysteine protease Prp.

The chain is Large ribosomal subunit protein bL27 from Natranaerobius thermophilus (strain ATCC BAA-1301 / DSM 18059 / JW/NM-WN-LF).